We begin with the raw amino-acid sequence, 375 residues long: Queuine tRNA-ribosyltransferase (375 aa).

Asp-90 functions as the Proton acceptor in the catalytic mechanism. Substrate-binding positions include 90–94 (DSGGF), Asp-144, Gln-190, and Gly-217. The RNA binding stretch occupies residues 248 to 254 (GIGTPHY). Catalysis depends on Asp-267, which acts as the Nucleophile. An RNA binding; important for wobble base 34 recognition region spans residues 272-276 (TRIAR). Zn(2+) is bound by residues Cys-305, Cys-307, Cys-310, and His-336.

This sequence belongs to the queuine tRNA-ribosyltransferase family. In terms of assembly, homodimer. Within each dimer, one monomer is responsible for RNA recognition and catalysis, while the other monomer binds to the replacement base PreQ1. Zn(2+) is required as a cofactor.

The enzyme catalyses 7-aminomethyl-7-carbaguanine + guanosine(34) in tRNA = 7-aminomethyl-7-carbaguanosine(34) in tRNA + guanine. Its pathway is tRNA modification; tRNA-queuosine biosynthesis. Its function is as follows. Catalyzes the base-exchange of a guanine (G) residue with the queuine precursor 7-aminomethyl-7-deazaguanine (PreQ1) at position 34 (anticodon wobble position) in tRNAs with GU(N) anticodons (tRNA-Asp, -Asn, -His and -Tyr). Catalysis occurs through a double-displacement mechanism. The nucleophile active site attacks the C1' of nucleotide 34 to detach the guanine base from the RNA, forming a covalent enzyme-RNA intermediate. The proton acceptor active site deprotonates the incoming PreQ1, allowing a nucleophilic attack on the C1' of the ribose to form the product. After dissociation, two additional enzymatic reactions on the tRNA convert PreQ1 to queuine (Q), resulting in the hypermodified nucleoside queuosine (7-(((4,5-cis-dihydroxy-2-cyclopenten-1-yl)amino)methyl)-7-deazaguanosine). This chain is Queuine tRNA-ribosyltransferase, found in Borrelia duttonii (strain Ly).